Reading from the N-terminus, the 362-residue chain is Tyrosyl-DNA phosphodiesterase 2 (362 aa).

The residue at position 1 (methionine 1) is an N-acetylmethionine. Residues 1-20 form a disordered region; that stretch reads MELGSCLEGGREAAEEEGEP. Residues lysine 23 and lysine 82 each participate in a glycyl lysine isopeptide (Lys-Gly) (interchain with G-Cter in SUMO2) cross-link. A disordered region spans residues 87-109; sequence LTNEETTDSTTSKISPSEDTQQE. Phosphothreonine; by ACVR1B is present on residues threonine 88 and threonine 92. Polar residues predominate over residues 94–109; that stretch reads DSTTSKISPSEDTQQE. Serine 95 is modified (phosphoserine). An interaction with 5' end of substrate DNA region spans residues 120–124; sequence NIDGL. Aspartate 122 and glutamate 152 together coordinate Mg(2+). Residues 226 to 231 form an interaction with 5' end of substrate DNA region; that stretch reads HLESTR. The active-site Proton donor/acceptor is aspartate 262. The interaction with 5' end of substrate DNA stretch occupies residues 264–266; the sequence is NLR.

It belongs to the CCR4/nocturin family. As to quaternary structure, interacts with TRAF2, TRAF3, TRAF5, TRAF6, TNFRSF8/CD30, TNFRSF5/CD40, TNFRSF1B/TNF-R75, ETS1, ETS2, FLI1, SMAD3 and ACVR1B/ALK4. (Microbial infection) Interacts with Hantaan hantavirus nucleoprotein. In terms of assembly, (Microbial infection) Interacts with Seoul hantavirus nucleoprotein. It depends on Mg(2+) as a cofactor. Mn(2+) serves as cofactor. In terms of processing, ubiquitinated by TRAF6. Widely expressed. Highly expressed in various brain regions, including the frontal and occipital lobes, the hippocampus, the striatum and the cerebellum.

The protein localises to the nucleus. Its subcellular location is the PML body. It is found in the nucleolus. The protein resides in the cytoplasm. Functionally, DNA repair enzyme that can remove a variety of covalent adducts from DNA through hydrolysis of a 5'-phosphodiester bond, giving rise to DNA with a free 5' phosphate. Catalyzes the hydrolysis of dead-end complexes between DNA and the topoisomerase 2 (TOP2) active site tyrosine residue. The 5'-tyrosyl DNA phosphodiesterase activity can enable the repair of TOP2-induced DNA double-strand breaks/DSBs without the need for nuclease activity, creating a 'clean' DSB with 5'-phosphate termini that are ready for ligation. Thereby, protects the transcription of many genes involved in neurological development and maintenance from the abortive activity of TOP2. Hydrolyzes 5'-phosphoglycolates on protruding 5' ends on DSBs due to DNA damage by radiation and free radicals. Has preference for single-stranded DNA or duplex DNA with a 4 base pair overhang as substrate. Acts as a regulator of ribosome biogenesis following stress. Also has 3'-tyrosyl DNA phosphodiesterase activity, but less efficiently and much slower than TDP1. Constitutes the major if not only 5'-tyrosyl-DNA phosphodiesterase in cells. Also acts as an adapter by participating in the specific activation of MAP3K7/TAK1 in response to TGF-beta: associates with components of the TGF-beta receptor-TRAF6-TAK1 signaling module and promotes their ubiquitination dependent complex formation. Involved in non-canonical TGF-beta induced signaling routes. May also act as a negative regulator of ETS1 and may inhibit NF-kappa-B activation. Its function is as follows. (Microbial infection) Used by picornaviruses to remove the small polypeptide, VPg (virus Protein genome-linked, the primer for viral RNA synthesis), from the genomic RNA of the virus. Acts as a 5'-tyrosyl RNA phosphodiesterase and cleaves the covalent VPg-Tyr-RNA bond. This cleavage would play a role in viral replication and occur in viral replication vesicles, but would not act on viral mRNA. The polypeptide is Tyrosyl-DNA phosphodiesterase 2 (Homo sapiens (Human)).